The following is a 184-amino-acid chain: Probable RNA 2'-phosphotransferase (184 aa).

It belongs to the KptA/TPT1 family.

Its function is as follows. Removes the 2'-phosphate from RNA via an intermediate in which the phosphate is ADP-ribosylated by NAD followed by a presumed transesterification to release the RNA and generate ADP-ribose 1''-2''-cyclic phosphate (APPR&gt;P). May function as an ADP-ribosylase. This chain is Probable RNA 2'-phosphotransferase, found in Rhizobium leguminosarum bv. trifolii (strain WSM2304).